The following is a 546-amino-acid chain: Choline/ethanolamine transporter FLVCR2 (546 aa).

Residues 1–84 are disordered; that stretch reads MVNESLNQEE…TLAQPSGLTH (84 aa). Residues 1–93 are Cytoplasmic-facing; it reads MVNESLNQEE…HPNELVKEDS (93 aa). Over residues 22 to 49 the composition is skewed to polar residues; it reads QADTSYSTQPSVSIHPSVSGHPSVSIHP. Tandem repeats lie at residues 31 to 36, 37 to 42, 43 to 48, 49 to 54, 55 to 60, 61 to 66, and 67 to 72. A 9 X 6 AA tandem repeats of P-S-[VS]-S-[VIAG]-[HD] region spans residues 31–84; that stretch reads PSVSIHPSVSGHPSVSIHPSVSGHPSVSIDPSVSVHPSSSAHPSTLAQPSGLTH. Residues 54 to 74 are compositionally biased toward low complexity; that stretch reads HPSVSIDPSVSVHPSSSAHPS. Residues 73–78 form an 8; approximate repeat; that stretch reads PSTLAQ. Residues 79–84 form a 9; approximate repeat; sequence PSGLTH. A helical transmembrane segment spans residues 94-118; that stretch reads VIKVSKRRWAVVLVFSCYSLCNAFQ. Residues N115, A116, and W119 each coordinate choline. The Extracellular segment spans residues 119-136; that stretch reads WIQYGSINNIFMNFYGVS. The helical transmembrane segment at 137–164 threads the bilayer; sequence AFAIDWLSMCYMLTYIPLLLPVAWMLEK. Over 165 to 166 the chain is Cytoplasmic; the sequence is FG. Residues 167–186 traverse the membrane as a helical segment; the sequence is LRTIAITGSALNCLGAWVKL. Residues 187-193 lie on the Extracellular side of the membrane; sequence GSLEPHL. A helical membrane pass occupies residues 194–222; that stretch reads FPVTMVGQVICSVAQVFILGMPSRIASVW. L212 serves as a coordination point for choline. Topologically, residues 223 to 227 are cytoplasmic; it reads FGANE. A helical membrane pass occupies residues 228-253; the sequence is VSTACSMAVFGNQLGIAIGFLVPPVL. The Extracellular segment spans residues 254–258; the sequence is VPNIK. A helical membrane pass occupies residues 259–288; that stretch reads DQEKLAYHISIMFYIIGGVATLLFILVIIV. Topologically, residues 289–324 are cytoplasmic; it reads FKEKPKYPPSRAQSLSYALATTDASYLSSIVRLFKN. The chain crosses the membrane as a helical span at residues 325–355; that stretch reads LNFVLLVITYGLNAGAFYALSTLLNRMVIMH. Y342 is a choline binding site. The Extracellular segment spans residues 356 to 359; that stretch reads FPGQ. A helical membrane pass occupies residues 360-388; that stretch reads EVNAGRIGLTIVIAGMFGAMISGIWLDKS. The Cytoplasmic segment spans residues 389–390; sequence KT. A helical membrane pass occupies residues 391-413; sequence YKETTLVVYIMTLVGMVVYTFTL. The Extracellular segment spans residues 414–416; that stretch reads NLN. A helical membrane pass occupies residues 417 to 446; it reads HLWIVFITADSLGFFMTGYLPLGFEFAVEL. Residues 447-454 are Cytoplasmic-facing; that stretch reads TYPESEGV. The helical transmembrane segment at 455–480 threads the bilayer; the sequence is SSGLLNVSAQVFGIIFTISQGQIIDN. Q464 is a choline binding site. Residues 481–482 are Extracellular-facing; that stretch reads YG. The chain crosses the membrane as a helical span at residues 483–505; the sequence is SVPGNIFLCVFLALGSALTAFIK. The Cytoplasmic segment spans residues 506–546; it reads SDLRRQRANKDAPETKVQEEEEEEEESNTSKVPTVLSEAHL. A compositionally biased stretch (basic and acidic residues) spans 511–523; it reads QRANKDAPETKVQ. Residues 511–546 are disordered; that stretch reads QRANKDAPETKVQEEEEEEEESNTSKVPTVLSEAHL. At S535 the chain carries Phosphoserine.

Belongs to the major facilitator superfamily. Feline leukemia virus subgroup C receptor (TC 2.A.1.28.1) family. Interacts with components of electron transfer chain complexes III, IV and V including CYC1, NDUFA4, COX4I1, ATP5PD and ATP5F1C; these interactions occur in the absence of heme and are disrupted upon heme binding. Interacts with ATP2A2; this interaction occurs in the absence of heme and promotes ATP2A2 proteasomal degradation; the complex is dissociated upon heme binding. Interacts with HMOX1; this interaction is potentiated in the presence of heme.

It is found in the cell membrane. The protein resides in the mitochondrion membrane. The protein localises to the endoplasmic reticulum membrane. It catalyses the reaction choline(out) = choline(in). The enzyme catalyses ethanolamine(in) = ethanolamine(out). The catalysed reaction is heme b(in) = heme b(out). Its function is as follows. Choline uniporter that specifically mediates choline uptake at the blood-brain-barrier. Responsible for the majority of choline uptake across the blood-brain-barrier from the circulation into the brain. Choline, a nutrient critical for brain development, is a precursor of phosphatidylcholine, as well as betaine. Also mediates transport of ethanolamine. Choline and ethanolamine transport is not coupled with proton transport and is exclusively driven by the choline gradient across the plasma membrane. However, the presence of an inwardly directed proton gradient enhances choline uptake. Also acts as a heme b transporter. Required to regulate mitochondrial respiration processes, ATP synthesis and thermogenesis. At low heme levels, interacts with components of electron transfer chain (ETC) complexes and ATP2A2, leading to ubiquitin-mediated degradation of ATP2A2 and inhibition of thermogenesis. Upon heme binding, dissociates from ETC complexes to allow switching from mitochondrial ATP synthesis to thermogenesis. This chain is Choline/ethanolamine transporter FLVCR2 (Flvcr2), found in Rattus norvegicus (Rat).